The chain runs to 478 residues: Cysteine--tRNA ligase (478 aa).

C37 serves as a coordination point for Zn(2+). The short motif at 39–49 (PTVYHYAHIGN) is the 'HIGH' region element. Zn(2+) is bound by residues C224, H249, and E253. Residues 281–285 (KMSKS) carry the 'KMSKS' region motif. K284 is a binding site for ATP.

The protein belongs to the class-I aminoacyl-tRNA synthetase family. In terms of assembly, monomer. Requires Zn(2+) as cofactor.

The protein resides in the cytoplasm. The catalysed reaction is tRNA(Cys) + L-cysteine + ATP = L-cysteinyl-tRNA(Cys) + AMP + diphosphate. In Protochlamydia amoebophila (strain UWE25), this protein is Cysteine--tRNA ligase.